Here is a 108-residue protein sequence, read N- to C-terminus: ATP-dependent Clp protease adapter protein ClpS (108 aa).

The span at 1-15 (MPHESSPDSQHEHGV) shows a compositional bias: basic and acidic residues. Positions 1–22 (MPHESSPDSQHEHGVAVEAARP) are disordered.

Belongs to the ClpS family. Binds to the N-terminal domain of the chaperone ClpA.

Functionally, involved in the modulation of the specificity of the ClpAP-mediated ATP-dependent protein degradation. This Stenotrophomonas maltophilia (strain K279a) protein is ATP-dependent Clp protease adapter protein ClpS.